Here is a 129-residue protein sequence, read N- to C-terminus: Fluoride-specific ion channel FluC (129 aa).

The next 4 membrane-spanning stretches (helical) occupy residues 8 to 28 (ILLVGVGGFLGSVARYLVALW), 34 to 54 (AVFPFATLTVNLLGSFLIGFI), 70 to 90 (IFLVTGFCGGFTTFSSYMIEH), and 102 to 122 (AALYLFGSLIGGFIALYLGII). Glycine 78 and threonine 81 together coordinate Na(+).

It belongs to the fluoride channel Fluc/FEX (TC 1.A.43) family.

It is found in the cell inner membrane. It carries out the reaction fluoride(in) = fluoride(out). Na(+) is not transported, but it plays an essential structural role and its presence is essential for fluoride channel function. Functionally, fluoride-specific ion channel. Important for reducing fluoride concentration in the cell, thus reducing its toxicity. The chain is Fluoride-specific ion channel FluC from Chlorobium chlorochromatii (strain CaD3).